The chain runs to 303 residues: Bifunctional protein FolD 2 (303 aa).

Residues 169–171 (GRS), Ser194, and Ile235 each bind NADP(+).

It belongs to the tetrahydrofolate dehydrogenase/cyclohydrolase family. Homodimer.

It catalyses the reaction (6R)-5,10-methylene-5,6,7,8-tetrahydrofolate + NADP(+) = (6R)-5,10-methenyltetrahydrofolate + NADPH. The enzyme catalyses (6R)-5,10-methenyltetrahydrofolate + H2O = (6R)-10-formyltetrahydrofolate + H(+). It participates in one-carbon metabolism; tetrahydrofolate interconversion. Its function is as follows. Catalyzes the oxidation of 5,10-methylenetetrahydrofolate to 5,10-methenyltetrahydrofolate and then the hydrolysis of 5,10-methenyltetrahydrofolate to 10-formyltetrahydrofolate. In Pseudomonas putida (strain GB-1), this protein is Bifunctional protein FolD 2.